A 321-amino-acid chain; its full sequence is Prephenate dehydratase (321 aa).

In terms of domain architecture, Prephenate dehydratase spans 3–189; the sequence is RIAYLGPEGT…ARTRFVLVGR (187 aa). The 78-residue stretch at 203-280 folds into the ACT domain; it reads SAVLRIDNQP…ADVRYLGSWP (78 aa).

Homodimer.

It catalyses the reaction prephenate + H(+) = 3-phenylpyruvate + CO2 + H2O. It participates in amino-acid biosynthesis; L-phenylalanine biosynthesis; phenylpyruvate from prephenate: step 1/1. The sequence is that of Prephenate dehydratase (pheA) from Mycobacterium bovis (strain ATCC BAA-935 / AF2122/97).